We begin with the raw amino-acid sequence, 33 residues long: Lysozyme C, spleen isozyme (33 aa).

The protein belongs to the glycosyl hydrolase 22 family. Monomer.

It carries out the reaction Hydrolysis of (1-&gt;4)-beta-linkages between N-acetylmuramic acid and N-acetyl-D-glucosamine residues in a peptidoglycan and between N-acetyl-D-glucosamine residues in chitodextrins.. Functionally, lysozymes have primarily a bacteriolytic function; those in tissues and body fluids are associated with the monocyte-macrophage system and enhance the activity of immunoagents. The protein is Lysozyme C, spleen isozyme of Equus caballus (Horse).